The following is a 675-amino-acid chain: Transmembrane protein 232 (675 aa).

The chain crosses the membrane as a helical span at residues 163 to 183; that stretch reads LVKIGYLIFLRLFVFFLHGHL. Positions 598-634 form a coiled coil; it reads WQKDMEARKREEEAYKAQNQKDKEEKEKIHFQEIMKQ. The disordered stretch occupies residues 605-624; that stretch reads RKREEEAYKAQNQKDKEEKE.

As to expression, high expression in the testis and weak expression levels in the spleen, liver, brain, uterus, lung, epididymis and kidney. Not detected in the heart or ovary.

Its subcellular location is the membrane. In terms of biological role, plays a critical role for male fertility and sperm motility by regulating sperm cytoplasm removal and maintaining axoneme integrity. In Mus musculus (Mouse), this protein is Transmembrane protein 232 (Tmem232).